Here is a 273-residue protein sequence, read N- to C-terminus: Shikimate dehydrogenase (NADP(+)) (273 aa).

Shikimate is bound by residues 15 to 17 and Thr62; that span reads SKS. Lys66 (proton acceptor) is an active-site residue. Asp78 serves as a coordination point for NADP(+). 2 residues coordinate shikimate: Asn87 and Asp103. NADP(+) contacts are provided by residues 127–131, 150–155, Ala218, and Gly238; these read GAGGA and NRTHTR.

It belongs to the shikimate dehydrogenase family. Homodimer.

The enzyme catalyses shikimate + NADP(+) = 3-dehydroshikimate + NADPH + H(+). The protein operates within metabolic intermediate biosynthesis; chorismate biosynthesis; chorismate from D-erythrose 4-phosphate and phosphoenolpyruvate: step 4/7. Involved in the biosynthesis of the chorismate, which leads to the biosynthesis of aromatic amino acids. Catalyzes the reversible NADPH linked reduction of 3-dehydroshikimate (DHSA) to yield shikimate (SA). The chain is Shikimate dehydrogenase (NADP(+)) from Yersinia pseudotuberculosis serotype O:1b (strain IP 31758).